The primary structure comprises 316 residues: Ribosomal RNA small subunit methyltransferase H (316 aa).

S-adenosyl-L-methionine-binding positions include 42–44, D62, F86, D104, and Q111; that span reads GGH.

This sequence belongs to the methyltransferase superfamily. RsmH family.

The protein localises to the cytoplasm. It catalyses the reaction cytidine(1402) in 16S rRNA + S-adenosyl-L-methionine = N(4)-methylcytidine(1402) in 16S rRNA + S-adenosyl-L-homocysteine + H(+). Functionally, specifically methylates the N4 position of cytidine in position 1402 (C1402) of 16S rRNA. The polypeptide is Ribosomal RNA small subunit methyltransferase H (Polynucleobacter asymbioticus (strain DSM 18221 / CIP 109841 / QLW-P1DMWA-1) (Polynucleobacter necessarius subsp. asymbioticus)).